Reading from the N-terminus, the 175-residue chain is NADH-ubiquinone oxidoreductase chain 6 (175 aa).

A run of 6 helical transmembrane segments spans residues M1–P21, S25–L45, F47–V67, V88–L108, L115–S137, and Y149–M169.

Belongs to the complex I subunit 6 family. As to quaternary structure, core subunit of respiratory chain NADH dehydrogenase (Complex I) which is composed of 45 different subunits.

It is found in the mitochondrion inner membrane. It catalyses the reaction a ubiquinone + NADH + 5 H(+)(in) = a ubiquinol + NAD(+) + 4 H(+)(out). Core subunit of the mitochondrial membrane respiratory chain NADH dehydrogenase (Complex I) which catalyzes electron transfer from NADH through the respiratory chain, using ubiquinone as an electron acceptor. Essential for the catalytic activity and assembly of complex I. In Hippopotamus amphibius (Hippopotamus), this protein is NADH-ubiquinone oxidoreductase chain 6 (MT-ND6).